The primary structure comprises 211 residues: B3 domain-containing protein At5g42700 (211 aa).

Residues 110-201 (FVKSMLQSHV…AFKVYITRVG (92 aa)) constitute a DNA-binding region (TF-B3).

Its subcellular location is the nucleus. The sequence is that of B3 domain-containing protein At5g42700 from Arabidopsis thaliana (Mouse-ear cress).